A 439-amino-acid polypeptide reads, in one-letter code: Histidine--tRNA ligase (439 aa).

This sequence belongs to the class-II aminoacyl-tRNA synthetase family. In terms of assembly, homodimer.

It localises to the cytoplasm. It carries out the reaction tRNA(His) + L-histidine + ATP = L-histidyl-tRNA(His) + AMP + diphosphate + H(+). In Leptospira borgpetersenii serovar Hardjo-bovis (strain L550), this protein is Histidine--tRNA ligase.